Reading from the N-terminus, the 511-residue chain is GMP synthase [glutamine-hydrolyzing] (511 aa).

Residues alanine 5 to asparagine 195 enclose the Glutamine amidotransferase type-1 domain. Cysteine 82 functions as the Nucleophile in the catalytic mechanism. Active-site residues include histidine 169 and glutamate 171. Residues tryptophan 196 to arginine 386 enclose the GMPS ATP-PPase domain. Position 223–229 (serine 223–leucine 229) interacts with ATP.

As to quaternary structure, homodimer.

The enzyme catalyses XMP + L-glutamine + ATP + H2O = GMP + L-glutamate + AMP + diphosphate + 2 H(+). It functions in the pathway purine metabolism; GMP biosynthesis; GMP from XMP (L-Gln route): step 1/1. In terms of biological role, catalyzes the synthesis of GMP from XMP. This is GMP synthase [glutamine-hydrolyzing] (guaA) from Borreliella burgdorferi (strain ATCC 35210 / DSM 4680 / CIP 102532 / B31) (Borrelia burgdorferi).